We begin with the raw amino-acid sequence, 1094 residues long: Potassium-transporting ATPase alpha chain 2 (1094 aa).

Positions 1–21 (MAGGAHRADRATGEERKEGGG) are enriched in basic and acidic residues. The disordered stretch occupies residues 1–37 (MAGGAHRADRATGEERKEGGGRWRAPHSPSPPGPRGC). Positions 28–37 (SPSPPGPRGC) are enriched in pro residues. Over 56 to 157 (RYCTLLLFQR…NALTPPKQTP (102 aa)) the chain is Cytoplasmic. Residues 158-178 (EIIKFLKQMVGGFSILLWVGA) traverse the membrane as a helical segment. The Lumenal portion of the chain corresponds to 179 to 201 (VLCWIAFGIQYVSNPSASLDRVY). A helical transmembrane segment spans residues 202–222 (LGTVLAVVVILTGIFAYYQEA). Over 223–358 (KSTNIMASFC…NEKTPIAIEI (136 aa)) the chain is Cytoplasmic. The segment at 286–305 (SSLTGESEPQSRSSGFTHEN) is disordered. The helical transmembrane segment at 359–378 (EHFVHIVAGVAVSVGILFFI) threads the bilayer. Residues 379-390 (IAVCMKYHVLDA) are Lumenal-facing. Residues 391–408 (IIFLIAIIVANVPEGLLA) traverse the membrane as a helical segment. The Cytoplasmic segment spans residues 409-842 (TVTVALSLTA…EEGRLIFDNL (434 aa)). The 4-aspartylphosphate intermediate role is filled by aspartate 446. Positions 787 and 791 each coordinate Mg(2+). The helical transmembrane segment at 843–862 (KKTIAYTLTKNIAELCPFLI) threads the bilayer. Residues 863 to 872 (YIILGLPLPI) lie on the Lumenal side of the membrane. Residues 873–893 (GTITLLFIDLGTDIIPSIALA) traverse the membrane as a helical segment. Topologically, residues 894–913 (YEKAESDIMNRKPRHKKKDR) are cytoplasmic. The chain crosses the membrane as a helical span at residues 914 to 936 (LVNQQLAVYSYLHIGLMQALGAF). Residues 937–988 (LVYFTVYAQQGFRPTSLFHLRIAWDSDHLNDLEDNYGQEWTSYQRQYLEWTG) are Lumenal-facing. Residues 989 to 1008 (YTAFFVGIMVQQIADLIIRK) traverse the membrane as a helical segment. Residues 1009–1022 (TRKNSIFKQGLFRN) lie on the Cytoplasmic side of the membrane. Serine 1013 carries the phosphoserine; by PKA modification. Residues 1023–1041 (KVIWVGIASQIIVALLLSY) traverse the membrane as a helical segment. Residues 1042–1056 (GLGSITALNFTMLKA) lie on the Lumenal side of the membrane. The helical transmembrane segment at 1057–1077 (QYWFVAVPHAILIWVYDEMRK) threads the bilayer. Residues 1078 to 1094 (LFIRLYPGSWWDKNMYY) are Cytoplasmic-facing.

The protein belongs to the cation transport ATPase (P-type) (TC 3.A.3) family. Type IIC subfamily. The X(+)/K(+) ATPase pump is composed of a catalytic alpha subunit and an auxiliary non-catalytic beta subunit. The alpha subunit pairs with the beta subunit of gastric H(+)/K(+) ATPase ATP4B or the beta subunit of Na(+)/K(+) ATPases ATP1B1 and ATP1B3; this interaction is required for the formation of a functionally active pump and its targeting at the plasma membrane. In terms of tissue distribution, found in the skin, kidney, distal colon and brain. In the kidney it is found in the connecting tubule, cortical collecting duct and outer medullary collecting duct while in the brain it is specific to choroid plexus and cortex.

It localises to the apical cell membrane. The catalysed reaction is K(+)(out) + ATP + H2O + H(+)(in) = K(+)(in) + ADP + phosphate + 2 H(+)(out). It carries out the reaction K(+)(out) + Na(+)(in) + ATP + H2O = K(+)(in) + Na(+)(out) + ADP + phosphate + H(+). Functionally, the catalytic subunit of a H(+)/K(+) ATPase and/or Na(+)/K(+) ATPase pump which transports K(+) ions in exchange for Na(+) and/or H(+) ions across the apical membrane of epithelial cells. Uses ATP as an energy source to pump K(+) ions into the cell while transporting Na(+) and/or H(+) ions to the extracellular compartment. Involved in the maintenance of electrolyte homeostasis through K(+) ion absorption in kidney and colon. In the airway epithelium, may play a primary role in mucus acidification regulating its viscosity and clearance. This is Potassium-transporting ATPase alpha chain 2 (ATP12A) from Oryctolagus cuniculus (Rabbit).